The sequence spans 302 residues: Deoxyhypusine hydroxylase (302 aa).

Position 1 is an N-acetylmethionine (Met1). HEAT-like PBS-type repeat units lie at residues 54 to 80 (LKHE…VLQD), 87 to 113 (VRHE…YSSD), 174 to 200 (ERYR…GLHC), 205 to 231 (FRHE…ALAR), and 238 to 264 (VRHE…HADD). Positions 56, 89, and 90 each coordinate Fe cation. Fe cation-binding residues include His207, His240, and Glu241.

This sequence belongs to the deoxyhypusine hydroxylase family. Requires Fe(2+) as cofactor.

The enzyme catalyses [eIF5A protein]-deoxyhypusine + AH2 + O2 = [eIF5A protein]-hypusine + A + H2O. Its pathway is protein modification; eIF5A hypusination. Its function is as follows. Catalyzes the hydroxylation of the N(6)-(4-aminobutyl)-L-lysine intermediate produced by deoxyhypusine synthase/DHPS on a critical lysine of the eukaryotic translation initiation factor 5A/eIF-5A. This is the second step of the post-translational modification of that lysine into an unusual amino acid residue named hypusine. Hypusination is unique to mature eIF-5A factor and is essential for its function. The sequence is that of Deoxyhypusine hydroxylase from Homo sapiens (Human).